A 685-amino-acid chain; its full sequence is Small ribosomal subunit protein mS39 (685 aa).

A mitochondrion-targeting transit peptide spans 1–10 (MAAAAVAARR). An N6-acetyllysine modification is found at lysine 127. PPR repeat units follow at residues 150–184 (IEDVSEAALEERIRLRKVRASVDMFDQLLQAGTTV), 185–220 (SLETTNSLLDLLCYYGDQEPPADYPFQQTEHLENLE), 254–288 (NARSYCTMIRGMVKHRAYAQALNVYTELLNNRLSA), 289–329 (DVYT…KVKP), 330–366 (NLQTFNTILKGLRKCYSLGRIPALQILREMKHIGIEP), 367–407 (SLAT…TFSP), 412–446 (DGRFFQLAMSVCSSLRDLELAYQVHRLLNTGDNRK), 454–488 (RKVYYSKFFSLICSLEQIDVTLKWYKDLIPSVFLP), 489–523 (HYQIFIGLLQALDVANRLELVPQIWKDSKEYSHTF), and 572–606 (PANPLQYIAVLFLRGGRSQEAWKMLELFKKHKKIP). The tract at residues 663 to 685 (LGNLTELNSSDGESSSDSDSDDK) is disordered. Acidic residues predominate over residues 676-685 (SSSDSDSDDK).

The protein belongs to the mitochondrion-specific ribosomal protein mS39 family. As to quaternary structure, component of the mitochondrial ribosome small subunit (28S) which comprises a 12S rRNA and about 30 distinct proteins. Associated with the 12S mitochondrial rRNA (12S mt-rRNA).

The protein resides in the mitochondrion. Its function is as follows. Mitochondrial RNA-binding protein that has a role in mitochondrial translation. The sequence is that of Small ribosomal subunit protein mS39 (Ptcd3) from Mus musculus (Mouse).